A 322-amino-acid chain; its full sequence is Sideroflexin-1 (322 aa).

N-acetylserine is present on serine 2. Residues 2–102 lie on the Mitochondrial matrix side of the membrane; it reads SGELPPNINI…MSAQVPMNMT (101 aa). Residues 103–120 traverse the membrane as a helical segment; the sequence is ITGCMMTFYRTTPAVLFW. At 121–146 the chain is on the mitochondrial intermembrane side; sequence QWINQSFNAVVNYTNRSGDAPLTVNE. The helical transmembrane segment at 147–167 threads the bilayer; sequence LGTAYVSATTGAVATALGLNA. Topologically, residues 168–174 are mitochondrial matrix; the sequence is LTKHVSP. Residues 175–195 traverse the membrane as a helical segment; the sequence is LIGRFVPFAAVAAANCINIPL. Over 196–228 the chain is Mitochondrial intermembrane; that stretch reads MRQRELRAGIPVTDENGNRLGESANAAKQAITQ. The chain crosses the membrane as a helical span at residues 229–249; that stretch reads VVISRILMAAPGMAIPPFIMN. The Mitochondrial matrix portion of the chain corresponds to 250-266; it reads TLEKKAFLKRFPWMSAP. The helical transmembrane segment at 267 to 287 threads the bilayer; the sequence is IQVGLVGFCLVFATPLCCALF. Residues 288–322 lie on the Mitochondrial intermembrane side of the membrane; sequence PQKSSMSVTSLEAELQAKIRETSPELRRVYFNKGL.

The protein belongs to the sideroflexin family.

The protein localises to the mitochondrion inner membrane. The catalysed reaction is L-serine(in) = L-serine(out). It carries out the reaction L-alanine(in) = L-alanine(out). It catalyses the reaction L-cysteine(in) = L-cysteine(out). Its function is as follows. Amino acid transporter importing serine, an essential substrate of the mitochondrial branch of the one-carbon pathway, into mitochondria. Mitochondrial serine is then converted to glycine and formate, which exits to the cytosol where it is used to generate the charged folates that serve as one-carbon donors. May also transport other amino acids including alanine and cysteine. The chain is Sideroflexin-1 (SFXN1) from Sus scrofa (Pig).